The following is a 1051-amino-acid chain: Putative transcription factor SEF1 (1051 aa).

Residues 1-10 (MSTDVSERGA) show a composition bias toward basic and acidic residues. Disordered regions lie at residues 1-54 (MSTD…SEES) and 67-90 (GQAS…RPVT). A compositionally biased stretch (low complexity) spans 11–21 (EAGSSSGLLSS). The segment at residues 92-122 (CTHCRQHKIKCNASENFPSSCSRCERMGLQC) is a DNA-binding region (zn(2)-C6 fungal-type). Positions 206-218 (SSVKSSVNTPSGS) are enriched in low complexity. Disordered stretches follow at residues 206–227 (SSVK…VDVS), 738–759 (EKNR…TEKR), and 927–968 (ASGN…QPAP).

The protein resides in the nucleus. Putative transcription factor. The chain is Putative transcription factor SEF1 (SEF1) from Eremothecium gossypii (strain ATCC 10895 / CBS 109.51 / FGSC 9923 / NRRL Y-1056) (Yeast).